A 422-amino-acid polypeptide reads, in one-letter code: Exodeoxyribonuclease 7 large subunit (422 aa).

This sequence belongs to the XseA family. Heterooligomer composed of large and small subunits.

It localises to the cytoplasm. The enzyme catalyses Exonucleolytic cleavage in either 5'- to 3'- or 3'- to 5'-direction to yield nucleoside 5'-phosphates.. Its function is as follows. Bidirectionally degrades single-stranded DNA into large acid-insoluble oligonucleotides, which are then degraded further into small acid-soluble oligonucleotides. The chain is Exodeoxyribonuclease 7 large subunit from Leptospira borgpetersenii serovar Hardjo-bovis (strain JB197).